The following is a 408-amino-acid chain: Leucine aminopeptidase 1 (408 aa).

The first 16 residues, 1–16 (MKVSSAIALLLPVVAA), serve as a signal peptide directing secretion. Positions 17-89 (RFVDSAFEQD…SAQSATTGPA (73 aa)) are excised as a propeptide. N-linked (GlcNAc...) asparagine glycosylation is found at Asn95, Asn108, and Asn182. Zn(2+) is bound by residues His190, Asp209, Glu248, and Asp275. An intrachain disulfide couples Cys324 to Cys328. His357 contributes to the Zn(2+) binding site.

It belongs to the peptidase M28 family. M28E subfamily. As to quaternary structure, monomer. Zn(2+) serves as cofactor.

The protein resides in the secreted. In terms of biological role, extracellular aminopeptidase that allows assimilation of proteinaceous substrates. In Grosmannia clavigera (strain kw1407 / UAMH 11150) (Blue stain fungus), this protein is Leucine aminopeptidase 1 (LAP1).